The following is a 557-amino-acid chain: Dihydroxy-acid dehydratase (557 aa).

Cys-50 serves as a coordination point for [2Fe-2S] cluster. Asp-82 contributes to the Mg(2+) binding site. Position 123 (Cys-123) interacts with [2Fe-2S] cluster. 2 residues coordinate Mg(2+): Asp-124 and Lys-125. Position 125 is an N6-carboxylysine (Lys-125). [2Fe-2S] cluster is bound at residue Cys-195. Residue Glu-447 participates in Mg(2+) binding. The active-site Proton acceptor is Ser-473.

Belongs to the IlvD/Edd family. In terms of assembly, homodimer. The cofactor is [2Fe-2S] cluster. It depends on Mg(2+) as a cofactor.

The enzyme catalyses (2R)-2,3-dihydroxy-3-methylbutanoate = 3-methyl-2-oxobutanoate + H2O. The catalysed reaction is (2R,3R)-2,3-dihydroxy-3-methylpentanoate = (S)-3-methyl-2-oxopentanoate + H2O. It participates in amino-acid biosynthesis; L-isoleucine biosynthesis; L-isoleucine from 2-oxobutanoate: step 3/4. The protein operates within amino-acid biosynthesis; L-valine biosynthesis; L-valine from pyruvate: step 3/4. Functionally, functions in the biosynthesis of branched-chain amino acids. Catalyzes the dehydration of (2R,3R)-2,3-dihydroxy-3-methylpentanoate (2,3-dihydroxy-3-methylvalerate) into 2-oxo-3-methylpentanoate (2-oxo-3-methylvalerate) and of (2R)-2,3-dihydroxy-3-methylbutanoate (2,3-dihydroxyisovalerate) into 2-oxo-3-methylbutanoate (2-oxoisovalerate), the penultimate precursor to L-isoleucine and L-valine, respectively. This chain is Dihydroxy-acid dehydratase, found in Janthinobacterium sp. (strain Marseille) (Minibacterium massiliensis).